Consider the following 273-residue polypeptide: MSAIGSQKRLTPPRISAMKGGKPIVCLTAYTTPMARLLDDHCDLLLVGDSLGMVLYGMETTIGVTLDMMIAHGKAVMRGVAKACVVVDMPFGSYQESKEVAFRNAVRILQETGCDAVKLEGGEEMAETIAFLTKRGIPVMGHIGLMPQQVQTAGGYRSVGHSEHETSKIRRDAHAIGGSGAFAVVIEGTVEPLAREVTSAMHIPTIGIGASAACDGQVLVSDDILGLFNDFKPRFVKRYDELGKRVADAVAAYAEDVRSRKFPAADHTFKRRP.

Positions 49 and 88 each coordinate Mg(2+). 3-methyl-2-oxobutanoate-binding positions include 49-50 (DS), aspartate 88, and lysine 118. Glutamate 120 contacts Mg(2+). The active-site Proton acceptor is glutamate 187.

The protein belongs to the PanB family. In terms of assembly, homodecamer; pentamer of dimers. Mg(2+) serves as cofactor.

Its subcellular location is the cytoplasm. The catalysed reaction is 3-methyl-2-oxobutanoate + (6R)-5,10-methylene-5,6,7,8-tetrahydrofolate + H2O = 2-dehydropantoate + (6S)-5,6,7,8-tetrahydrofolate. Its pathway is cofactor biosynthesis; (R)-pantothenate biosynthesis; (R)-pantoate from 3-methyl-2-oxobutanoate: step 1/2. Functionally, catalyzes the reversible reaction in which hydroxymethyl group from 5,10-methylenetetrahydrofolate is transferred onto alpha-ketoisovalerate to form ketopantoate. The polypeptide is 3-methyl-2-oxobutanoate hydroxymethyltransferase (Rhizobium etli (strain ATCC 51251 / DSM 11541 / JCM 21823 / NBRC 15573 / CFN 42)).